Here is a 349-residue protein sequence, read N- to C-terminus: Anthranilate phosphoribosyltransferase (349 aa).

5-phospho-alpha-D-ribose 1-diphosphate contacts are provided by residues Gly82, Gly85–Asp86, Asn92–Thr95, Lys110–Gly118, and Ser122. Gly82 provides a ligand contact to anthranilate. Ser94 contacts Mg(2+). Asn113 is a binding site for anthranilate. Arg168 lines the anthranilate pocket. Residues Asp227 and Glu228 each coordinate Mg(2+).

It belongs to the anthranilate phosphoribosyltransferase family. Homodimer. Mg(2+) is required as a cofactor.

It catalyses the reaction N-(5-phospho-beta-D-ribosyl)anthranilate + diphosphate = 5-phospho-alpha-D-ribose 1-diphosphate + anthranilate. The protein operates within amino-acid biosynthesis; L-tryptophan biosynthesis; L-tryptophan from chorismate: step 2/5. Its function is as follows. Catalyzes the transfer of the phosphoribosyl group of 5-phosphorylribose-1-pyrophosphate (PRPP) to anthranilate to yield N-(5'-phosphoribosyl)-anthranilate (PRA). This is Anthranilate phosphoribosyltransferase from Pseudomonas putida (Arthrobacter siderocapsulatus).